A 280-amino-acid polypeptide reads, in one-letter code: Probable holocytochrome-c-type synthase (280 aa).

Residues 1 to 95 (MGSSQSTPKV…FALPTKREKS (95 aa)) are disordered. 2 HRM repeats span residues 35-40 (QCPLTP) and 56-61 (ACPVGA).

It belongs to the cytochrome c-type heme lyase family.

The protein localises to the mitochondrion inner membrane. It catalyses the reaction holo-[cytochrome c] = apo-[cytochrome c] + heme b. Its function is as follows. Probable lyase that catalyzes the covalent linking of the heme group to the cytochrome C apoprotein to produce the mature functional cytochrome. This chain is Probable holocytochrome-c-type synthase (cchl-1), found in Caenorhabditis elegans.